Consider the following 261-residue polypeptide: MSKFSDIITQLLFDAPPREINSVYDSLVIITEDTDNDTLLDALKRCLVAKRLPIDVEGSPTIVTEYNKDGAKYFDPFKKVLFSVDCLDRVGLDIEPHESETTPYQEKLYEELQKYVAKNFPGDSACTVLPTGDDDELAIIIVSSKFSPSNYWSGYWKSEYIYSPEERSLTGRIDVVVHYFEDGNVKFSTQEFIDKEDINDPISCIRALESEIETGLDESFSKLNQTQFAKLRRKLPVTRSKVNWGKAISNYRLGKDAAQGK.

It belongs to the F-actin-capping protein alpha subunit family. Heterodimer of an alpha and a beta subunit.

Functionally, F-actin-capping proteins bind in a Ca(2+)-independent manner to the fast growing ends of actin filaments (barbed end) thereby blocking the exchange of subunits at these ends. Unlike other capping proteins (such as gelsolin and severin), these proteins do not sever actin filaments. In Eremothecium gossypii (strain ATCC 10895 / CBS 109.51 / FGSC 9923 / NRRL Y-1056) (Yeast), this protein is F-actin-capping protein subunit alpha (CAP1).